A 170-amino-acid polypeptide reads, in one-letter code: Lipoprotein signal peptidase (170 aa).

3 consecutive transmembrane segments (helical) span residues 9–29, 72–92, and 94–114; these read FNIF…KYLV, IFFL…SLKE, and NCIA…NVID. Active-site residues include Asp-124 and Asp-146. A helical transmembrane segment spans residues 143–163; the sequence is NFADSYVVIGMILFLVYDFFI.

The protein belongs to the peptidase A8 family.

It localises to the cell inner membrane. The catalysed reaction is Release of signal peptides from bacterial membrane prolipoproteins. Hydrolyzes -Xaa-Yaa-Zaa-|-(S,diacylglyceryl)Cys-, in which Xaa is hydrophobic (preferably Leu), and Yaa (Ala or Ser) and Zaa (Gly or Ala) have small, neutral side chains.. The protein operates within protein modification; lipoprotein biosynthesis (signal peptide cleavage). Its function is as follows. This protein specifically catalyzes the removal of signal peptides from prolipoproteins. This Borreliella burgdorferi (strain ATCC 35210 / DSM 4680 / CIP 102532 / B31) (Borrelia burgdorferi) protein is Lipoprotein signal peptidase.